A 96-amino-acid polypeptide reads, in one-letter code: Colicin-K immunity protein (96 aa).

A helical membrane pass occupies residues 73–93; that stretch reads ALFYLLMAIPVGLPSFIYYTL.

The protein resides in the cell membrane. This protein is able to protect a cell, which harbors the plasmid ColK encoding colicin K, against colicin K. This is Colicin-K immunity protein (cki) from Escherichia coli.